The primary structure comprises 155 residues: Small ribosomal subunit protein uS13 (155 aa).

Basic residues predominate over residues 135-145; it reads QHTKTTGRRGR. Residues 135–155 form a disordered region; sequence QHTKTTGRRGRTVGVSRTKGA. Low complexity predominate over residues 146–155; that stretch reads TVGVSRTKGA.

This sequence belongs to the universal ribosomal protein uS13 family. In terms of assembly, component of the small ribosomal subunit.

The protein resides in the cytoplasm. In terms of biological role, component of the small ribosomal subunit. The ribosome is a large ribonucleoprotein complex responsible for the synthesis of proteins in the cell. The polypeptide is Small ribosomal subunit protein uS13 (RPS18) (Entamoeba histolytica (strain ATCC 30459 / HM-1:IMSS / ABRM)).